The sequence spans 59 residues: U-actitoxin-Aer2a (59 aa).

In terms of processing, contains 5 disulfide bonds.

It is found in the secreted. It localises to the nematocyst. The polypeptide is U-actitoxin-Aer2a (Anemonia erythraea (Sea anemone)).